We begin with the raw amino-acid sequence, 880 residues long: Kinesin heavy chain (880 aa).

Residues 4 to 327 (SIKVVCRFRP…LRFGMRAKAI (324 aa)) form the Kinesin motor domain. ATP contacts are provided by residues 85 to 92 (GQTGAGKS) and 235 to 242 (GSEKVGKT). Residues 388–426 (VSGAKAAAAQTPRPSTPSRLATESRAETPVAERSATPGI) form a disordered region. Polar residues predominate over residues 399-408 (PRPSTPSRLA). The stretch at 428-849 (IDKDEREEFL…QEKLTTASHR (422 aa)) forms a coiled coil.

Belongs to the TRAFAC class myosin-kinesin ATPase superfamily. Kinesin family. Kinesin subfamily.

Its subcellular location is the cytoplasm. It is found in the cytoskeleton. In terms of biological role, kinesin is a microtubule-associated force-producing protein that may play a role in organelle transport. Its motor activity is directed toward the microtubule's plus end. This Botryotinia fuckeliana (Noble rot fungus) protein is Kinesin heavy chain (klp1).